A 274-amino-acid chain; its full sequence is Diaminopimelate epimerase (274 aa).

The substrate site is built by N11, Q44, and N64. Residue C73 is the Proton donor of the active site. Residues G74 to N75, N157, N190, and E208 to R209 each bind substrate. C217 serves as the catalytic Proton acceptor. G218–S219 contacts substrate.

It belongs to the diaminopimelate epimerase family. Homodimer.

The protein localises to the cytoplasm. It catalyses the reaction (2S,6S)-2,6-diaminopimelate = meso-2,6-diaminopimelate. The protein operates within amino-acid biosynthesis; L-lysine biosynthesis via DAP pathway; DL-2,6-diaminopimelate from LL-2,6-diaminopimelate: step 1/1. Catalyzes the stereoinversion of LL-2,6-diaminopimelate (L,L-DAP) to meso-diaminopimelate (meso-DAP), a precursor of L-lysine and an essential component of the bacterial peptidoglycan. The sequence is that of Diaminopimelate epimerase from Actinobacillus succinogenes (strain ATCC 55618 / DSM 22257 / CCUG 43843 / 130Z).